The following is a 94-amino-acid chain: ESAT-6-like protein EsxL (94 aa).

Belongs to the WXG100 family. ESAT-6 subfamily. In terms of assembly, strongly interacts with EsxK to form a heterodimeric complex under reducing conditions.

The protein localises to the secreted. This Mycobacterium tuberculosis (strain CDC 1551 / Oshkosh) protein is ESAT-6-like protein EsxL.